The primary structure comprises 428 residues: Adenylosuccinate synthetase 1 (428 aa).

GTP contacts are provided by residues 12-18 (GDEGKGK) and 40-42 (GHT). Aspartate 13 acts as the Proton acceptor in catalysis. The Mg(2+) site is built by aspartate 13 and glycine 40. Residues 13–16 (DEGK), 38–41 (NAGH), threonine 133, arginine 147, asparagine 224, threonine 239, and arginine 303 each bind IMP. Histidine 41 acts as the Proton donor in catalysis. Residue 299–305 (TTTGRRR) participates in substrate binding. Residues arginine 305, 331–333 (KLD), and 413–415 (GVG) each bind GTP.

It belongs to the adenylosuccinate synthetase family. As to quaternary structure, homodimer. Requires Mg(2+) as cofactor.

The protein resides in the cytoplasm. It carries out the reaction IMP + L-aspartate + GTP = N(6)-(1,2-dicarboxyethyl)-AMP + GDP + phosphate + 2 H(+). It functions in the pathway purine metabolism; AMP biosynthesis via de novo pathway; AMP from IMP: step 1/2. In terms of biological role, plays an important role in the de novo pathway and in the salvage pathway of purine nucleotide biosynthesis. Catalyzes the first committed step in the biosynthesis of AMP from IMP. This is Adenylosuccinate synthetase 1 from Laccaria bicolor (strain S238N-H82 / ATCC MYA-4686) (Bicoloured deceiver).